Reading from the N-terminus, the 382-residue chain is Sphingosine 1-phosphate receptor 1 (382 aa).

The Extracellular portion of the chain corresponds to 1–46 (MGSTRIPLVKALHSPVSDYVNYDIIVRHYNYTGKLKISADKDNGIK). Position 10 is an N6-acetyllysine (Lys-10). Residue Asn-30 is glycosylated (N-linked (GlcNAc...) asparagine). A helical transmembrane segment spans residues 47–68 (LISVVFILICCFIILENIFVLL). The Cytoplasmic portion of the chain corresponds to 69–82 (TIWKTKKFHRPMYY). Residues 83 to 104 (FIGNLALSDLLAGVAYTANLLL) traverse the membrane as a helical segment. Topologically, residues 105-116 (SGATTYKLTPAQ) are extracellular. Residues 117-138 (WFLREGSMFVALSASVFSLLAI) form a helical membrane-spanning segment. 120–121 (RE) is a sphing-4-enine 1-phosphate binding site. Residues 139–160 (AIERYITMLKMKLHNGSNRFRS) are Cytoplasmic-facing. A helical transmembrane segment spans residues 161 to 182 (FLLISACWVISLILGGLPIMGW). Residues 183 to 196 (NCISTLPSCSTVLP) are Extracellular-facing. Cysteines 184 and 191 form a disulfide. The chain crosses the membrane as a helical span at residues 197–224 (LYHKHYILFCTTVFTLLLLSIVILYCRI). Topologically, residues 225–257 (YSLVRTRSRRLTFRKNISKASRSSEKSLALLKT) are cytoplasmic. Phosphothreonine; by PKB/AKT1 is present on Thr-236. Residues 258 to 278 (VIIVLGVFIACWAPLFILLLL) form a helical membrane-spanning segment. Position 265–269 (265–269 (FIACW)) interacts with sphing-4-enine 1-phosphate. At 279-289 (DVGCKVKTCDI) the chain is on the extracellular side. Cys-282 and Cys-287 are disulfide-bonded. Residues 290 to 310 (LFRTEYFLVLAVLNSGTNPII) form a helical membrane-spanning segment. Residues 311-382 (YTLSNKEMRR…MSSGNVNSSS (72 aa)) are Cytoplasmic-facing. Cys-328 carries the S-palmitoyl cysteine lipid modification. Positions 349 to 382 (EFSRSKSDNSSHPQKDDGDNPETIMSSGNVNSSS) are disordered. Residues Ser-351 and Ser-353 each carry the phosphoserine modification. Positions 351–366 (SRSKSDNSSHPQKDDG) are enriched in basic and acidic residues. Positions 371–382 (TIMSSGNVNSSS) are enriched in polar residues.

This sequence belongs to the G-protein coupled receptor 1 family. In terms of assembly, interacts with GNAI1 and GNAI3. Interacts with CD69; this interaction promotes S1PR1 degradation. S1P-induced endothelial cell migration requires the PKB/AKT1-mediated phosphorylation of the third intracellular loop at the Thr-236 residue. In terms of processing, palmitoylated by ZDHHC5. Palmitoylation is required for targeting to plasma membrane, enabling G(i) coupling.

It localises to the cell membrane. The protein localises to the endosome. Its subcellular location is the membrane raft. In terms of biological role, G-protein coupled receptor for the bioactive lysosphingolipid sphingosine 1-phosphate (S1P) that seems to be coupled to the G(i) subclass of heteromeric G proteins. Signaling leads to the activation of RAC1, SRC, PTK2/FAK1 and MAP kinases. Plays an important role in cell migration, probably via its role in the reorganization of the actin cytoskeleton and the formation of lamellipodia in response to stimuli that increase the activity of the sphingosine kinase SPHK1. Required for normal chemotaxis toward sphingosine 1-phosphate. Required for normal embryonic heart development and normal cardiac morphogenesis. Plays an important role in the regulation of sprouting angiogenesis and vascular maturation. Inhibits sprouting angiogenesis to prevent excessive sprouting during blood vessel development. Required for normal egress of mature T-cells from the thymus into the blood stream and into peripheral lymphoid organs. Plays a role in the migration of osteoclast precursor cells, the regulation of bone mineralization and bone homeostasis. Plays a role in responses to oxidized 1-palmitoyl-2-arachidonoyl-sn-glycero-3-phosphocholine by pulmonary endothelial cells and in the protection against ventilator-induced lung injury. In Bos taurus (Bovine), this protein is Sphingosine 1-phosphate receptor 1 (S1PR1).